Consider the following 321-residue polypeptide: Probable 3-hydroxyisobutyrate dehydrogenase, mitochondrial (321 aa).

NAD(+) is bound by residues 23 to 52 (KTVG…IVFD), 86 to 87 (LP), and Thr117. Residue Lys192 is part of the active site. Residue Lys267 participates in NAD(+) binding.

It belongs to the HIBADH-related family. 3-hydroxyisobutyrate dehydrogenase subfamily.

The protein resides in the mitochondrion. The enzyme catalyses 3-hydroxy-2-methylpropanoate + NAD(+) = 2-methyl-3-oxopropanoate + NADH + H(+). Its pathway is amino-acid degradation; L-valine degradation. The sequence is that of Probable 3-hydroxyisobutyrate dehydrogenase, mitochondrial (hibA) from Dictyostelium discoideum (Social amoeba).